The sequence spans 501 residues: Aldehyde dehydrogenase 1A1 (501 aa).

Position 2 is an N-acetylserine (serine 2). N6-acetyllysine is present on residues lysine 91 and lysine 128. NAD(+) contacts are provided by residues 167 to 170, 193 to 196, 226 to 227, and 246 to 247; these read LPWN, KPAE, GP, and GS. Lysine 252 bears the N6-acetyllysine mark. Glutamate 269 serves as the catalytic Proton acceptor. 269 to 271 contacts NAD(+); it reads ELG. The Nucleophile role is filled by cysteine 303. The interval 336–501 is mediates interaction with PRMT3; it reads LTPGVSQGPQ…VTVKISQKNS (166 aa). The residue at position 337 (threonine 337) is a Phosphothreonine. 349–353 contacts NAD(+); sequence EQYDK. N6-acetyllysine occurs at positions 353 and 367. 400–402 is a binding site for NAD(+); it reads EIF. Lysine 410 is modified (N6-acetyllysine). Serine 413 carries the phosphoserine modification. N6-acetyllysine occurs at positions 419, 435, and 495.

Belongs to the aldehyde dehydrogenase family. In terms of assembly, homotetramer. Interacts with PRMT3; the interaction is direct, inhibits ALDH1A1 aldehyde dehydrogenase activity and is independent of the methyltransferase activity of PRMT3. In terms of processing, the N-terminus is blocked most probably by acetylation.

Its subcellular location is the cytoplasm. It localises to the cytosol. The protein localises to the cell projection. It is found in the axon. The catalysed reaction is an aldehyde + NAD(+) + H2O = a carboxylate + NADH + 2 H(+). The enzyme catalyses all-trans-retinal + NAD(+) + H2O = all-trans-retinoate + NADH + 2 H(+). It catalyses the reaction 9-cis-retinal + NAD(+) + H2O = 9-cis-retinoate + NADH + 2 H(+). It carries out the reaction 11-cis-retinal + NAD(+) + H2O = 11-cis-retinoate + NADH + 2 H(+). The catalysed reaction is 13-cis-retinal + NAD(+) + H2O = 13-cis-retinoate + NADH + 2 H(+). The enzyme catalyses 3-deoxyglucosone + NAD(+) + H2O = 2-dehydro-3-deoxy-D-gluconate + NADH + 2 H(+). It catalyses the reaction (E)-4-hydroxynon-2-enal + NAD(+) + H2O = (E)-4-hydroxynon-2-enoate + NADH + 2 H(+). It carries out the reaction malonaldehyde + NAD(+) + H2O = 3-oxopropanoate + NADH + 2 H(+). The catalysed reaction is hexanal + NAD(+) + H2O = hexanoate + NADH + 2 H(+). The enzyme catalyses propanal + NAD(+) + H2O = propanoate + NADH + 2 H(+). It catalyses the reaction acetaldehyde + NAD(+) + H2O = acetate + NADH + 2 H(+). It carries out the reaction benzaldehyde + NAD(+) + H2O = benzoate + NADH + 2 H(+). The catalysed reaction is 4-aminobutanal + NAD(+) + H2O = 4-aminobutanoate + NADH + 2 H(+). Its pathway is cofactor metabolism; retinol metabolism. Functionally, cytosolic dehydrogenase that catalyzes the irreversible oxidation of a wide range of aldehydes to their corresponding carboxylic acid. Functions downstream of retinol dehydrogenases and catalyzes the oxidation of retinaldehyde into retinoic acid, the second step in the oxidation of retinol/vitamin A into retinoic acid. This pathway is crucial to control the levels of retinol and retinoic acid, two important molecules which excess can be teratogenic and cytotoxic. Also oxidizes aldehydes resulting from lipid peroxidation like (E)-4-hydroxynon-2-enal/HNE, malonaldehyde and hexanal that form protein adducts and are highly cytotoxic. By participating for instance to the clearance of (E)-4-hydroxynon-2-enal/HNE in the lens epithelium prevents the formation of HNE-protein adducts and lens opacification. Also functions downstream of fructosamine-3-kinase in the fructosamine degradation pathway by catalyzing the oxidation of 3-deoxyglucosone, the carbohydrate product of fructosamine 3-phosphate decomposition, which is itself a potent glycating agent that may react with lysine and arginine side-chains of proteins. Also has an aminobutyraldehyde dehydrogenase activity and is probably part of an alternative pathway for the biosynthesis of GABA/4-aminobutanoate in midbrain, thereby playing a role in GABAergic synaptic transmission. This chain is Aldehyde dehydrogenase 1A1, found in Equus caballus (Horse).